We begin with the raw amino-acid sequence, 94 residues long: Co-chaperonin GroES (94 aa).

The protein belongs to the GroES chaperonin family. In terms of assembly, heptamer of 7 subunits arranged in a ring. Interacts with the chaperonin GroEL.

The protein localises to the cytoplasm. Functionally, together with the chaperonin GroEL, plays an essential role in assisting protein folding. The GroEL-GroES system forms a nano-cage that allows encapsulation of the non-native substrate proteins and provides a physical environment optimized to promote and accelerate protein folding. GroES binds to the apical surface of the GroEL ring, thereby capping the opening of the GroEL channel. In Limosilactobacillus reuteri (strain DSM 20016) (Lactobacillus reuteri), this protein is Co-chaperonin GroES.